We begin with the raw amino-acid sequence, 436 residues long: Trigger factor (436 aa).

Residues 163 to 248 form the PPIase FKBP-type domain; sequence GDQVIIDFVG…VHSVQTKVLP (86 aa).

This sequence belongs to the FKBP-type PPIase family. Tig subfamily.

Its subcellular location is the cytoplasm. It carries out the reaction [protein]-peptidylproline (omega=180) = [protein]-peptidylproline (omega=0). In terms of biological role, involved in protein export. Acts as a chaperone by maintaining the newly synthesized protein in an open conformation. Functions as a peptidyl-prolyl cis-trans isomerase. The protein is Trigger factor of Hydrogenovibrio crunogenus (strain DSM 25203 / XCL-2) (Thiomicrospira crunogena).